The chain runs to 388 residues: Succinate--CoA ligase [ADP-forming] subunit beta (388 aa).

Residues 9 to 245 (KELLASYGLP…KSQENERELK (237 aa)) enclose the ATP-grasp domain. Residues lysine 46, 53-55 (GRG), glutamate 100, tyrosine 103, and glutamate 108 each bind ATP. Positions 200 and 214 each coordinate Mg(2+). Residues asparagine 265 and 322–324 (GIV) each bind substrate.

This sequence belongs to the succinate/malate CoA ligase beta subunit family. As to quaternary structure, heterotetramer of two alpha and two beta subunits. It depends on Mg(2+) as a cofactor.

It catalyses the reaction succinate + ATP + CoA = succinyl-CoA + ADP + phosphate. The catalysed reaction is GTP + succinate + CoA = succinyl-CoA + GDP + phosphate. It functions in the pathway carbohydrate metabolism; tricarboxylic acid cycle; succinate from succinyl-CoA (ligase route): step 1/1. Succinyl-CoA synthetase functions in the citric acid cycle (TCA), coupling the hydrolysis of succinyl-CoA to the synthesis of either ATP or GTP and thus represents the only step of substrate-level phosphorylation in the TCA. The beta subunit provides nucleotide specificity of the enzyme and binds the substrate succinate, while the binding sites for coenzyme A and phosphate are found in the alpha subunit. This is Succinate--CoA ligase [ADP-forming] subunit beta from Neisseria meningitidis serogroup A / serotype 4A (strain DSM 15465 / Z2491).